Consider the following 167-residue polypeptide: Lipoprotein signal peptidase (167 aa).

A run of 4 helical transmembrane segments spans residues 8-28, 46-66, 68-88, and 101-121; these read TFLTLLLLASIDWVSKLVVLL, WGHFSFLIIPSFNEGAAFGLF, QYKIPLLIFRVCVILGLALFL, and VALTLILAGALGNVGDILLYG. Active-site residues include aspartate 125 and aspartate 143. The chain crosses the membrane as a helical span at residues 139 to 159; the sequence is FNLADAFISIGTLLLIGHLYF.

It belongs to the peptidase A8 family.

It is found in the cell inner membrane. It catalyses the reaction Release of signal peptides from bacterial membrane prolipoproteins. Hydrolyzes -Xaa-Yaa-Zaa-|-(S,diacylglyceryl)Cys-, in which Xaa is hydrophobic (preferably Leu), and Yaa (Ala or Ser) and Zaa (Gly or Ala) have small, neutral side chains.. The protein operates within protein modification; lipoprotein biosynthesis (signal peptide cleavage). Its function is as follows. This protein specifically catalyzes the removal of signal peptides from prolipoproteins. This Chlamydia trachomatis serovar A (strain ATCC VR-571B / DSM 19440 / HAR-13) protein is Lipoprotein signal peptidase.